The following is a 175-amino-acid chain: MAAEAETKAMITLRSCEGQVFEVAEAVAMESQTIRHMIEDKCADTGIPLPNVSAKILSKVIEYCSKHVEARGGAAAAADGDAPAPAAVEANKAVEDELKTFDAEFVKVDQSTLFDLILAANYLNIKGLLDLTCQTVADMIKGKTPEEIRKTFNIKNDFTPEEEEEVRRENQWAFE.

The segment at I117–E175 is interaction with the F-box domain of F-box proteins.

It belongs to the SKP1 family. As to quaternary structure, part of a SCF (SKP1-CUL1-F-box protein) E3 ubiquitin-protein ligase complex. Interacts with rice black streaked dwarf virus RBSDV protein P7-2. Is able to form the SCF complex together with CUL1 and the viral P7-2 protein. Interacts with D3.

The protein resides in the nucleus. It participates in protein modification; protein ubiquitination. In terms of biological role, involved in ubiquitination and subsequent proteasomal degradation of target proteins. Together with CUL1, a RING-box and a F-box protein, it forms a SCF E3 ubiquitin ligase complex. The functional specificity of this complex depends on the type of F-box protein. In the SCF complex, it serves as an adapter that links the F-box protein to CUL1. This is SKP1-like protein 20 from Oryza sativa subsp. japonica (Rice).